The sequence spans 364 residues: Dihydroorotase (364 aa).

Zn(2+)-binding residues include H14, H16, K98, H137, H180, and D258. The residue at position 98 (K98) is an N6-carboxylysine.

This sequence belongs to the metallo-dependent hydrolases superfamily. DHOase family. Class II DHOase subfamily. Requires Zn(2+) as cofactor.

The enzyme catalyses (S)-dihydroorotate + H2O = N-carbamoyl-L-aspartate + H(+). It participates in pyrimidine metabolism; UMP biosynthesis via de novo pathway; (S)-dihydroorotate from bicarbonate: step 3/3. Functionally, catalyzes the conversion of ureidosuccinic acid (USA) to dihydroorotate, the third step of the de novo pyrimidine biosynthetic pathway. The chain is Dihydroorotase (URA4) from Saccharomyces cerevisiae (strain ATCC 204508 / S288c) (Baker's yeast).